The following is an 86-amino-acid chain: Small ribosomal subunit protein bS18 (86 aa).

Belongs to the bacterial ribosomal protein bS18 family. In terms of assembly, part of the 30S ribosomal subunit. Forms a tight heterodimer with protein bS6.

Binds as a heterodimer with protein bS6 to the central domain of the 16S rRNA, where it helps stabilize the platform of the 30S subunit. The polypeptide is Small ribosomal subunit protein bS18 (Campylobacter fetus subsp. fetus (strain 82-40)).